A 44-amino-acid chain; its full sequence is MRDLKTYLSAAPVLSTIWFGALAGLLIEINRFFPDALTFPFFSF.

A helical transmembrane segment spans residues 7–27 (YLSAAPVLSTIWFGALAGLLI).

This sequence belongs to the PsaJ family.

The protein localises to the plastid. The protein resides in the chloroplast thylakoid membrane. May help in the organization of the PsaE and PsaF subunits. In Pelargonium hortorum (Common geranium), this protein is Photosystem I reaction center subunit IX.